The primary structure comprises 79 residues: Small ribosomal subunit protein bS16 (79 aa).

Belongs to the bacterial ribosomal protein bS16 family.

The chain is Small ribosomal subunit protein bS16 from Nitratidesulfovibrio vulgaris (strain DSM 19637 / Miyazaki F) (Desulfovibrio vulgaris).